Reading from the N-terminus, the 434-residue chain is MRVVILGSGVVGVASAWYLAKAGHEVTVIDRQPGPAMETSAANAGQISPGYAAPWAAPGVPLKAVKWMFQRHAPLAVRLDGSSFQLSWMWQMLKNCNTEHYMTNKGRMVRLAEYSRDCIKALRQETGIQYEGRQGGTLQLFRTQQQFESAAKDIAVLEDAGVPYKLLEASQLASVEPALAQVAHKLTGGLQLPNDETGDCQLFTQQLAKLAQQAGVTFLYNRSVDRLLVEGDKISGVQCGGEIFKADSYVVAFGSYSTALLRDLVSIPVYPLKGYSLTIPITDESAAPFSTVLDETYKIAITRFDQRIRVGGMAEIVGFNTQLEQKRRETLEMVVRDLYPNGGRVEDATFWTGLRPMTPDGTPIVGKTSLKNLFLNTGHGTLGWTMACGSGQLLSDLISGITPAIPSDDLGVARYSAGFRSLYTGPLNDVHPAR.

3-17 is an FAD binding site; it reads VVILGSGVVGVASAW.

This sequence belongs to the DadA oxidoreductase family. FAD is required as a cofactor.

The enzyme catalyses a D-alpha-amino acid + A + H2O = a 2-oxocarboxylate + AH2 + NH4(+). The protein operates within amino-acid degradation; D-alanine degradation; NH(3) and pyruvate from D-alanine: step 1/1. Oxidative deamination of D-amino acids. This chain is D-amino acid dehydrogenase, found in Serratia proteamaculans (strain 568).